Here is a 61-residue protein sequence, read N- to C-terminus: MFAGLPSLSHEQQQKAVERIQELMTQGMSSGEAITTVAQEIRATHTGERIVALFDDEDDEE.

Belongs to the UPF0181 family.

The chain is UPF0181 protein Ent638_2380 from Enterobacter sp. (strain 638).